We begin with the raw amino-acid sequence, 103 residues long: MQNQRIRIRLKAFDHRLIDQSTAEIVETAKRAGAQVRGPIPLPTRKERFTVLISPHVNKDARDQYEIRTHKRLVDIVEPTEKTVDALMRLDLAAGVDVQISLG.

This sequence belongs to the universal ribosomal protein uS10 family. In terms of assembly, part of the 30S ribosomal subunit.

Functionally, involved in the binding of tRNA to the ribosomes. The protein is Small ribosomal subunit protein uS10 of Haemophilus ducreyi (strain 35000HP / ATCC 700724).